The following is a 340-amino-acid chain: S-adenosylmethionine:tRNA ribosyltransferase-isomerase (340 aa).

This sequence belongs to the QueA family. As to quaternary structure, monomer.

The protein localises to the cytoplasm. The catalysed reaction is 7-aminomethyl-7-carbaguanosine(34) in tRNA + S-adenosyl-L-methionine = epoxyqueuosine(34) in tRNA + adenine + L-methionine + 2 H(+). It participates in tRNA modification; tRNA-queuosine biosynthesis. Functionally, transfers and isomerizes the ribose moiety from AdoMet to the 7-aminomethyl group of 7-deazaguanine (preQ1-tRNA) to give epoxyqueuosine (oQ-tRNA). This Aliarcobacter butzleri (strain RM4018) (Arcobacter butzleri) protein is S-adenosylmethionine:tRNA ribosyltransferase-isomerase.